The following is an 89-amino-acid chain: Large ribosomal subunit protein bL27 (89 aa).

Residues 1-22 are disordered; that stretch reads MAQKKAGGSSRNGRDSAGRRLG.

Belongs to the bacterial ribosomal protein bL27 family.

In Gluconacetobacter diazotrophicus (strain ATCC 49037 / DSM 5601 / CCUG 37298 / CIP 103539 / LMG 7603 / PAl5), this protein is Large ribosomal subunit protein bL27.